A 307-amino-acid chain; its full sequence is Ras-related protein Rab-33 (307 aa).

A disordered region spans residues 19–80; the sequence is VIDPPKHVTA…IPPAPEAVTA (62 aa). 2 stretches are compositionally biased toward pro residues: residues 42–56 and 65–75; these read PTHP…PAVP and PTAPPPIPPAP. 107-114 provides a ligand contact to GTP; sequence GNAAVGKT. An Effector region motif is present at residues 129-137; it reads TEATIGVDF. GTP-binding positions include 155–159 and 217–220; these read DTAGQ and NKCD. S-geranylgeranyl cysteine attachment occurs at residues cysteine 306 and cysteine 307.

It belongs to the small GTPase superfamily. Rab family.

It is found in the cell membrane. The chain is Ras-related protein Rab-33 (rab-33) from Caenorhabditis elegans.